Reading from the N-terminus, the 510-residue chain is Probable DNA ligase (510 aa).

Glutamate 210 provides a ligand contact to ATP. Lysine 212 functions as the N6-AMP-lysine intermediate in the catalytic mechanism. Residues arginine 217, arginine 232, glutamate 261, phenylalanine 296, arginine 367, and lysine 373 each contribute to the ATP site.

This sequence belongs to the ATP-dependent DNA ligase family. Requires Mg(2+) as cofactor.

The catalysed reaction is ATP + (deoxyribonucleotide)n-3'-hydroxyl + 5'-phospho-(deoxyribonucleotide)m = (deoxyribonucleotide)n+m + AMP + diphosphate.. In terms of biological role, DNA ligase that seals nicks in double-stranded DNA during DNA replication, DNA recombination and DNA repair. The polypeptide is Probable DNA ligase (Saccharopolyspora erythraea (strain ATCC 11635 / DSM 40517 / JCM 4748 / NBRC 13426 / NCIMB 8594 / NRRL 2338)).